Consider the following 178-residue polypeptide: CDP-archaeol synthase (178 aa).

Helical transmembrane passes span leucine 3–valine 23, phenylalanine 56–tyrosine 76, isoleucine 91–isoleucine 111, and leucine 136–isoleucine 156.

It belongs to the CDP-archaeol synthase family. The cofactor is Mg(2+).

Its subcellular location is the cell membrane. The catalysed reaction is 2,3-bis-O-(geranylgeranyl)-sn-glycerol 1-phosphate + CTP + H(+) = CDP-2,3-bis-O-(geranylgeranyl)-sn-glycerol + diphosphate. Its pathway is membrane lipid metabolism; glycerophospholipid metabolism. In terms of biological role, catalyzes the formation of CDP-2,3-bis-(O-geranylgeranyl)-sn-glycerol (CDP-archaeol) from 2,3-bis-(O-geranylgeranyl)-sn-glycerol 1-phosphate (DGGGP) and CTP. This reaction is the third ether-bond-formation step in the biosynthesis of archaeal membrane lipids. The sequence is that of CDP-archaeol synthase from Methanococcus maripaludis (strain C5 / ATCC BAA-1333).